The sequence spans 116 residues: Large ribosomal subunit protein bL17 (116 aa).

Belongs to the bacterial ribosomal protein bL17 family. As to quaternary structure, part of the 50S ribosomal subunit. Contacts protein L32.

The protein is Large ribosomal subunit protein bL17 of Helicobacter hepaticus (strain ATCC 51449 / 3B1).